The following is a 318-amino-acid chain: NAD kinase (318 aa).

Residue D80 is the Proton acceptor of the active site. Residues D80 to G81, R85, N155 to E156, D185, and T196 to S201 contribute to the NAD(+) site.

Belongs to the NAD kinase family. The cofactor is a divalent metal cation.

It localises to the cytoplasm. It carries out the reaction NAD(+) + ATP = ADP + NADP(+) + H(+). Functionally, involved in the regulation of the intracellular balance of NAD and NADP, and is a key enzyme in the biosynthesis of NADP. Catalyzes specifically the phosphorylation on 2'-hydroxyl of the adenosine moiety of NAD to yield NADP. This is NAD kinase from Corynebacterium efficiens (strain DSM 44549 / YS-314 / AJ 12310 / JCM 11189 / NBRC 100395).